A 764-amino-acid polypeptide reads, in one-letter code: Zinc finger CCCH domain-containing protein 24 (764 aa).

2 ANK repeats span residues 108-138 and 143-175; these read EHRTPLMVAATYGSLAVLRLLLSLPSVDVNR and DGTTALHCAASGGSPSCVEAVKLLLAAGADADA. The C3H1-type zinc-finger motif lies at 321–348; the sequence is HYSCVPCPDFRKGVCRRGDMCEYAHGVF. Disordered stretches follow at residues 616 to 665 and 698 to 732; these read QREK…DWGV and KESPPEKQVTTAESINSVGPSPLMPPSVSNGEGPS. The segment covering 640–659 has biased composition (low complexity); the sequence is SGVVGSPLSSSWSKWGSPSG. Over residues 705–716 the composition is skewed to polar residues; it reads QVTTAESINSVG.

This is Zinc finger CCCH domain-containing protein 24 from Oryza sativa subsp. japonica (Rice).